Consider the following 587-residue polypeptide: MAVTDTESPHLGEITCGTLLEKLQEIWDEVGESDDERDKLLLQIEQECLDVYKRKVEQAAKSRAELLQTLSDANAELSSLTMSLGDKSLVGIPDKSSGTIKEQLAAIAPALEQLWQQKEERVREFSDVQSQIQKICGDIAGGLSNEVPIVDESDLSLKKLDDFQSQLQELQKEKSDRLRKVLEFVSTVHDLCAVLGLDFLSTVTEVHPSLDEDTSVQSKSISNETLSRLAKTVLTLKDDKKQRLQKLQELATQLIDLWNLMDTPDEERELFDHVTCNISSSVDEVTVPGALARDLIEQAEVEVDRLDQLKASRMKEIAFKKQSELEEIYARAHVEVNPESARERIMSLIDSGNVEPTELLADMDSQISKAKEEAFSRKDILDRVEKWMSACEEESWLEDYNRDQNRYSASRGAHLNLKRAEKARILVSKIPAMVDTLVAKTRAWEEEHSMSFAYDGVPLLAMLDEYGMLRQEREEEKRRLREQKKVQEQPHVEQESAFSTRPSPARPVSAKKTVGPRANNGGANGTHNRRLSLNANQNGSRSTAKEAGRRETLNRPAAPTNYVAISKEEAASSPVSGAADHQVPASP.

Coiled-coil stretches lie at residues 46–84, 151–181, 234–257, 290–317, and 461–489; these read QECL…TMSL, DESD…LRKV, LTLK…LIDL, ALAR…MKEI, and AMLD…VQEQ. The span at 474-494 shows a compositional bias: basic and acidic residues; it reads EEEKRRLREQKKVQEQPHVEQ. Positions 474–587 are disordered; sequence EEEKRRLREQ…AADHQVPASP (114 aa). Ser-503 carries the post-translational modification Phosphoserine. A Phosphothreonine modification is found at Thr-526. Residues 531–542 show a composition bias toward polar residues; the sequence is LSLNANQNGSRS. Phosphoserine occurs at positions 532 and 540. Phosphothreonine occurs at positions 543 and 552. Residues 543–553 show a composition bias toward basic and acidic residues; sequence TAKEAGRRETL. 3 positions are modified to phosphoserine: Ser-573, Ser-576, and Ser-586.

This sequence belongs to the MAP65/ASE1 family. Forms dimer. Binds to MT, mostly with coaligned MT, both between parallel or antiparallel, forming thick bundles. Interacts with the alpha-tubulin subunit of the tubulin heterodimer. Bundles polymerized MT via the formation of 25-nm crossbridges at specific stages of the cell cycle (e.g. bundles microtubules in interphase, anaphase and telophase but does not bind microtubules in prophase or metaphase), at the plus-end, the minus-end, or along the entire length of MT, and along phragmoplast MT. Interacts with SH3P1 and MPK4. In terms of processing, basal phosphorylation at all stages of the cell cycle. MT-binding properties inhibited by hyperphosphorylation mediated by CDKs and/or MAPKs (e.g. ANP2, ANP3, MPK4 and MPK6) during prometaphase and metaphase. As to expression, expressed in all organs and tissues with the exception of sepals and anthers. Bound to subsets of microtubules in the cells of root epidermis, hypocotyl and cotyledons (at protein level).

It localises to the nucleus. Its subcellular location is the cytoplasm. It is found in the cytoskeleton. The protein resides in the spindle. The protein localises to the phragmoplast. It localises to the cell cortex. Microtubule-associated protein that bundle and stabilize adjacent microtubules (MT) of the cell cortex. Enhances MT nucleation. Can also bind to tubulin dimers and promotes their polymerization. Confers MT resistance to the drug propyzamide and cold conditions. Plays a role in the central spindle at anaphase to early cytokinesis but is not essential at the midline of the phragmoplast at later stages. Represses metaphase spindle organization and the transition to anaphase in dephosphorylated active form. Promotes the formation of a planar network of antiparallel microtubules. May be involved in stomatal movement modulation by regulating the dynamic and arrangement of cortical MT. The polypeptide is 65-kDa microtubule-associated protein 1 (MAP65-1) (Arabidopsis thaliana (Mouse-ear cress)).